Reading from the N-terminus, the 148-residue chain is Large ribosomal subunit protein uL15 (148 aa).

Positions Met1–Gly30 are enriched in basic residues. The interval Met1–Gly37 is disordered. A (3S)-3-hydroxyhistidine modification is found at His39. Residues Lys47 and Lys55 each carry the N6-acetyllysine modification. Position 68 is a phosphoserine (Ser68). Residue Lys110 is modified to N6-acetyllysine.

The protein belongs to the universal ribosomal protein uL15 family. Component of the large ribosomal subunit. Post-translationally, hydroxylated on His-39 by MINA.

The protein localises to the cytoplasm. Its function is as follows. Component of the large ribosomal subunit. The ribosome is a large ribonucleoprotein complex responsible for the synthesis of proteins in the cell. The polypeptide is Large ribosomal subunit protein uL15 (RPL27A) (Bos taurus (Bovine)).